The chain runs to 26 residues: MVYVMSMVSLLKRLLTVTRWKLQITG.

This is an uncharacterized protein from Saccharomyces cerevisiae (strain ATCC 204508 / S288c) (Baker's yeast).